Reading from the N-terminus, the 390-residue chain is NADH-quinone oxidoreductase subunit D (390 aa).

The protein belongs to the complex I 49 kDa subunit family. As to quaternary structure, NDH-1 is composed of 14 different subunits. Subunits NuoB, C, D, E, F, and G constitute the peripheral sector of the complex.

The protein localises to the cell membrane. It carries out the reaction a quinone + NADH + 5 H(+)(in) = a quinol + NAD(+) + 4 H(+)(out). NDH-1 shuttles electrons from NADH, via FMN and iron-sulfur (Fe-S) centers, to quinones in the respiratory chain. The immediate electron acceptor for the enzyme in this species is believed to be ubiquinone. Couples the redox reaction to proton translocation (for every two electrons transferred, four hydrogen ions are translocated across the cytoplasmic membrane), and thus conserves the redox energy in a proton gradient. This is NADH-quinone oxidoreductase subunit D from Wolbachia sp. subsp. Brugia malayi (strain TRS).